The primary structure comprises 573 residues: Potassium-transporting ATPase potassium-binding subunit (573 aa).

10 helical membrane passes run 6–26 (ILFALFIVTIALITKPLGSYI), 66–86 (FFSLVSFSVMAFIFVLVILLL), 135–155 (ALAVQNFVSAAVGLCVAIALI), 177–197 (VFWILLPISIVIAIVYIFQGV), 257–277 (IQMVSIFAIAAALTYTFGKWV), 283–303 (GWLIFGVMLVLFIISLVVMTI), 382–402 (IFGGVGAGFYGFFMFLMLAVF), 428–448 (MFALLIFPCCVLVFTGLAAVI), 493–513 (ITIALSMLIGRFGVIFAVIML), and 537–557 (FIFAILVFFTILLIGGLTIFP).

The protein belongs to the KdpA family. As to quaternary structure, the system is composed of three essential subunits: KdpA, KdpB and KdpC.

It is found in the cell inner membrane. Functionally, part of the high-affinity ATP-driven potassium transport (or Kdp) system, which catalyzes the hydrolysis of ATP coupled with the electrogenic transport of potassium into the cytoplasm. This subunit binds the periplasmic potassium ions and delivers the ions to the membrane domain of KdpB through an intramembrane tunnel. This Francisella tularensis subsp. holarctica (strain FTNF002-00 / FTA) protein is Potassium-transporting ATPase potassium-binding subunit.